The primary structure comprises 693 residues: Protein-glutamine gamma-glutamyltransferase E (693 aa).

An N-acetylalanine modification is found at Ala2. The residue at position 111 (Tyr111) is a Phosphotyrosine. Residue Thr112 is modified to Phosphothreonine. Ca(2+) is bound by residues Ala222, Asn225, Asn227, Asp228, and Asn230. The active site involves Cys273. Asp302, Asp304, Asn306, Ser308, and Asp325 together coordinate Ca(2+). Active-site residues include His331 and Asp354. Ca(2+) is bound by residues Asn394, Ser416, Glu444, and Glu449.

This sequence belongs to the transglutaminase superfamily. Transglutaminase family. As to quaternary structure, consists of two polypeptide chains, which are synthesized as a precursor form of a single polypeptide. Requires Ca(2+) as cofactor. Post-translationally, activated by proteolytic processing. In vitro activation is commonly achieved by cleavage with dispase, a neutral bacterial protease. Dispase cleavage site was proposed to lie between Ser-470 and Ser-471 or between Pro-465 and Phe-466. Physiological activation may be catalyzed by CTSL and, to a lesser extent, by CTSS, but not by CTSB, CTSD nor CTSV.

It localises to the cytoplasm. The catalysed reaction is L-glutaminyl-[protein] + L-lysyl-[protein] = [protein]-L-lysyl-N(6)-5-L-glutamyl-[protein] + NH4(+). In terms of biological role, catalyzes the calcium-dependent formation of isopeptide cross-links between glutamine and lysine residues in various proteins, as well as the conjugation of polyamines to proteins. Involved in the formation of the cornified envelope (CE), a specialized component consisting of covalent cross-links of proteins beneath the plasma membrane of terminally differentiated keratinocytes. Catalyzes small proline-rich proteins (SPRR1 and SPRR2) and LOR cross-linking to form small interchain oligomers, which are further cross-linked by TGM1 onto the growing CE scaffold. In hair follicles, involved in cross-linking structural proteins to hardening the inner root sheath. This is Protein-glutamine gamma-glutamyltransferase E (TGM3) from Homo sapiens (Human).